A 675-amino-acid chain; its full sequence is DNA ligase (675 aa).

NAD(+)-binding positions include 35 to 39, 84 to 85, and Glu116; these read DEAYD and SL. The active-site N6-AMP-lysine intermediate is Lys118. The NAD(+) site is built by Arg139, Glu180, Lys296, and Lys320. Zn(2+)-binding residues include Cys414, Cys417, Cys432, and Cys437. The BRCT domain maps to 597–675; the sequence is PVDAFWNGKT…EREFLERLGM (79 aa).

It belongs to the NAD-dependent DNA ligase family. LigA subfamily. It depends on Mg(2+) as a cofactor. Mn(2+) is required as a cofactor.

The catalysed reaction is NAD(+) + (deoxyribonucleotide)n-3'-hydroxyl + 5'-phospho-(deoxyribonucleotide)m = (deoxyribonucleotide)n+m + AMP + beta-nicotinamide D-nucleotide.. Its function is as follows. DNA ligase that catalyzes the formation of phosphodiester linkages between 5'-phosphoryl and 3'-hydroxyl groups in double-stranded DNA using NAD as a coenzyme and as the energy source for the reaction. It is essential for DNA replication and repair of damaged DNA. The chain is DNA ligase from Syntrophobacter fumaroxidans (strain DSM 10017 / MPOB).